Reading from the N-terminus, the 140-residue chain is Large ribosomal subunit protein bL19 (140 aa).

A compositionally biased stretch (basic and acidic residues) spans 113–126; sequence RIAERQDRTADGKI. The interval 113 to 140 is disordered; sequence RIAERQDRTADGKIKKGGKSAPAPTAAE.

It belongs to the bacterial ribosomal protein bL19 family.

Functionally, this protein is located at the 30S-50S ribosomal subunit interface and may play a role in the structure and function of the aminoacyl-tRNA binding site. The chain is Large ribosomal subunit protein bL19 from Xanthobacter autotrophicus (strain ATCC BAA-1158 / Py2).